Here is a 666-residue protein sequence, read N- to C-terminus: DNA ligase (666 aa).

Residues 31–35 (DYDFD), 80–81 (SL), and E111 each bind NAD(+). K113 (N6-AMP-lysine intermediate) is an active-site residue. Residues R134, E170, K285, and K309 each contribute to the NAD(+) site. C403, C406, C421, and C427 together coordinate Zn(2+). The BRCT domain maps to 587–666 (VVSNKLLGKI…ESDFSALLTS (80 aa)).

This sequence belongs to the NAD-dependent DNA ligase family. LigA subfamily. Mg(2+) is required as a cofactor. Mn(2+) serves as cofactor.

It catalyses the reaction NAD(+) + (deoxyribonucleotide)n-3'-hydroxyl + 5'-phospho-(deoxyribonucleotide)m = (deoxyribonucleotide)n+m + AMP + beta-nicotinamide D-nucleotide.. DNA ligase that catalyzes the formation of phosphodiester linkages between 5'-phosphoryl and 3'-hydroxyl groups in double-stranded DNA using NAD as a coenzyme and as the energy source for the reaction. It is essential for DNA replication and repair of damaged DNA. The chain is DNA ligase from Flavobacterium psychrophilum (strain ATCC 49511 / DSM 21280 / CIP 103535 / JIP02/86).